The primary structure comprises 917 residues: Protein STE5 (917 aa).

2 disordered regions span residues 1 to 25 and 58 to 151; these read MMETPTDNIVSPFHNFGSSTQYSGT and FQRS…LSDN. The span at 16–25 shows a compositional bias: polar residues; that stretch reads FGSSTQYSGT. The segment covering 69–84 has biased composition (low complexity); sequence SPSPISSSTFSFSPKS. Polar residues-rich tracts occupy residues 85–110 and 118–138; these read RVTSSNSSGNEDGNLMNTPSTVSTDY and TSSLPRPNSNLFHASNSNLSR. Residue Ser-329 is modified to Phosphoserine. The segment covering 778 to 794 has biased composition (acidic residues); it reads HDDDDEEDNDDSTDNEL. Positions 778 to 821 are disordered; it reads HDDDDEEDNDDSTDNELDNSSGSLSDAESTTTIHIDSPFDNENA. Residues 799–821 show a composition bias toward polar residues; sequence GSLSDAESTTTIHIDSPFDNENA.

This sequence to yeast FAR1. In terms of processing, may be regulated at the phosphorylation level, and by the mating type of the cell and depends on an intact pheromone-response pathway.

The protein localises to the cytoplasm. Component of the pheromone signal transduction pathway. It mediates pheromone signals acting between STE20 and STE11. It is absolutely required for pheromone-induced transcription of FUS1. May play a role in cell-cycle arrest in response to pheromone. The polypeptide is Protein STE5 (STE5) (Saccharomyces cerevisiae (strain ATCC 204508 / S288c) (Baker's yeast)).